Reading from the N-terminus, the 238-residue chain is Probable transcriptional regulatory protein SGO_0454 (238 aa).

Belongs to the TACO1 family. YeeN subfamily.

The protein localises to the cytoplasm. This chain is Probable transcriptional regulatory protein SGO_0454, found in Streptococcus gordonii (strain Challis / ATCC 35105 / BCRC 15272 / CH1 / DL1 / V288).